A 160-amino-acid polypeptide reads, in one-letter code: SsrA-binding protein (160 aa).

Belongs to the SmpB family.

It is found in the cytoplasm. In terms of biological role, required for rescue of stalled ribosomes mediated by trans-translation. Binds to transfer-messenger RNA (tmRNA), required for stable association of tmRNA with ribosomes. tmRNA and SmpB together mimic tRNA shape, replacing the anticodon stem-loop with SmpB. tmRNA is encoded by the ssrA gene; the 2 termini fold to resemble tRNA(Ala) and it encodes a 'tag peptide', a short internal open reading frame. During trans-translation Ala-aminoacylated tmRNA acts like a tRNA, entering the A-site of stalled ribosomes, displacing the stalled mRNA. The ribosome then switches to translate the ORF on the tmRNA; the nascent peptide is terminated with the 'tag peptide' encoded by the tmRNA and targeted for degradation. The ribosome is freed to recommence translation, which seems to be the essential function of trans-translation. The protein is SsrA-binding protein of Mycobacterium bovis (strain ATCC BAA-935 / AF2122/97).